The sequence spans 631 residues: tRNA uridine 5-carboxymethylaminomethyl modification enzyme MnmG (631 aa).

Residues 15–20, I127, and S182 each bind FAD; that span reads GAGHAG. 276 to 290 lines the NAD(+) pocket; sequence GPRYCPSIEDKIVRF. An FAD-binding site is contributed by Q373.

This sequence belongs to the MnmG family. Homodimer. Heterotetramer of two MnmE and two MnmG subunits. It depends on FAD as a cofactor.

The protein resides in the cytoplasm. Its function is as follows. NAD-binding protein involved in the addition of a carboxymethylaminomethyl (cmnm) group at the wobble position (U34) of certain tRNAs, forming tRNA-cmnm(5)s(2)U34. The polypeptide is tRNA uridine 5-carboxymethylaminomethyl modification enzyme MnmG (Streptococcus mutans serotype c (strain ATCC 700610 / UA159)).